A 417-amino-acid polypeptide reads, in one-letter code: D-amino acid dehydrogenase (417 aa).

3–17 (IVVLGGGVVGVTSAW) lines the FAD pocket.

This sequence belongs to the DadA oxidoreductase family. It depends on FAD as a cofactor.

It catalyses the reaction a D-alpha-amino acid + A + H2O = a 2-oxocarboxylate + AH2 + NH4(+). Its pathway is amino-acid degradation; D-alanine degradation; NH(3) and pyruvate from D-alanine: step 1/1. In terms of biological role, oxidative deamination of D-amino acids. The chain is D-amino acid dehydrogenase from Aeromonas salmonicida (strain A449).